We begin with the raw amino-acid sequence, 514 residues long: Cytochrome P450 94A1 (514 aa).

Residues 7–29 (EVLLPYLLPLLLLILPTTIFFLT) traverse the membrane as a helical segment. Cys-458 provides a ligand contact to heme.

Belongs to the cytochrome P450 family. The cofactor is heme.

Its subcellular location is the endoplasmic reticulum membrane. Its function is as follows. Catalyzes the omega-hydroxylation of various fatty acids (FA) from 10 to 18 carbon atoms. The substrate specificity is higher for laurate &gt; palmitate &gt; myristate &gt; linolenate &gt; linoleate &gt; oleate &gt; caprate. May play a minor role in cutin synthesis and could be involved in plant defense. This chain is Cytochrome P450 94A1 (CYP94A1), found in Vicia sativa (Spring vetch).